The chain runs to 504 residues: L-carnitine/gamma-butyrobetaine antiporter (504 aa).

12 helical membrane-spanning segments follow: residues 10–30 (IEPKVFFPPLIIVGILCWLTV), 51–71 (WGWAFEWYMVVMLFGWFWLVF), 92–112 (IFMMFASCTSAAVLFWGSIEI), 143–163 (GPLPWATYSFLSVAFAYFFFV), 195–215 (FYLVALIFAMGTSLGLATPLV), 231–251 (LDAIIITCWIILNAICVACGL), 263–283 (SYLSFLMLGWVFIVSGASFIM), 316–336 (WTVFYWAWWVIYAIQMSIFLA), 347–367 (LCFGMVMGLTASTWILWTVLG), 398–418 (WAALPLSTATMWGFFILCFIA), 446–466 (LLVRIGWSILVGIIGIVLLAL), and 475–495 (AIIAGGCPLFFVNIMVTLSFI).

The protein belongs to the BCCT transporter (TC 2.A.15) family. CaiT subfamily. In terms of assembly, homotrimer.

It is found in the cell inner membrane. It carries out the reaction 4-(trimethylamino)butanoate(in) + (R)-carnitine(out) = 4-(trimethylamino)butanoate(out) + (R)-carnitine(in). The protein operates within amine and polyamine metabolism; carnitine metabolism. Its function is as follows. Catalyzes the exchange of L-carnitine for gamma-butyrobetaine. This Escherichia coli O157:H7 protein is L-carnitine/gamma-butyrobetaine antiporter.